A 270-amino-acid chain; its full sequence is Chymotrypsin-like elastase family member 3B (270 aa).

Residues 1-15 constitute a signal peptide (or 16); that stretch reads MMLRLLSSLLLVAVA. Positions 16-28 are cleaved as a propeptide — activation peptide; the sequence is SGYGPPSSRPSSR. The Peptidase S1 domain occupies 29–268; that stretch reads VVNGEDAVPY…FIDWIEETIA (240 aa). A disulfide bridge links C58 with C74. H73 acts as the Charge relay system in catalysis. N-linked (GlcNAc...) asparagine glycosylation occurs at N114. The cysteines at positions 117 and 120 are disulfide-linked. D123 serves as the catalytic Charge relay system. 3 disulfide bridges follow: C157–C223, C188–C204, and C213–C244. S217 serves as the catalytic Charge relay system.

Belongs to the peptidase S1 family. Elastase subfamily. In terms of tissue distribution, pancreas. Not detectable in keratinocytes.

It carries out the reaction Preferential cleavage: Ala-|-Xaa. Does not hydrolyze elastin.. Efficient protease with alanine specificity but only little elastolytic activity. The sequence is that of Chymotrypsin-like elastase family member 3B (CELA3B) from Homo sapiens (Human).